The following is a 131-amino-acid chain: Large ribosomal subunit protein eL32 (131 aa).

The segment at 39–77 (LGEKWRRPKGRHSKMRRKLKSKPKMPNPGYGSPKKVRGL) is disordered. The segment covering 44–61 (RRPKGRHSKMRRKLKSKP) has biased composition (basic residues).

The protein belongs to the eukaryotic ribosomal protein eL32 family.

This is Large ribosomal subunit protein eL32 (rpl32) from Methanopyrus kandleri (strain AV19 / DSM 6324 / JCM 9639 / NBRC 100938).